Consider the following 173-residue polypeptide: MADFPGKVSTQTSSQEPQRSFAISSSVDMGFIKSIPGILLIAEIVVGLLVWTLIASTPHYLIPALGWVLFVSITLWLLSIALLVILLLSLHQRLPSVPWPLVLLVFYSVAALLYLTAFLANAATVPGGYYQGHLGASAFFGIVETLLYTASSYFAYLGWRGEGQNAAGSTVPV.

Residues 1-34 lie on the Cytoplasmic side of the membrane; that stretch reads MADFPGKVSTQTSSQEPQRSFAISSSVDMGFIKS. The 130-residue stretch at 31 to 160 folds into the MARVEL domain; that stretch reads FIKSIPGILL…SSYFAYLGWR (130 aa). A helical transmembrane segment spans residues 35–55; the sequence is IPGILLIAEIVVGLLVWTLIA. At 56–67 the chain is on the extracellular side; the sequence is STPHYLIPALGW. Residues 68–88 form a helical membrane-spanning segment; that stretch reads VLFVSITLWLLSIALLVILLL. Residues 89-98 are Cytoplasmic-facing; that stretch reads SLHQRLPSVP. A helical membrane pass occupies residues 99 to 119; that stretch reads WPLVLLVFYSVAALLYLTAFL. Topologically, residues 120-138 are extracellular; sequence ANAATVPGGYYQGHLGASA. A helical membrane pass occupies residues 139-159; the sequence is FFGIVETLLYTASSYFAYLGW. The Cytoplasmic portion of the chain corresponds to 160 to 173; the sequence is RGEGQNAAGSTVPV.

This sequence belongs to the MAL family. As to quaternary structure, forms oligomers. As to expression, expressed in the posterior midgut.

The protein localises to the cell membrane. Its subcellular location is the myelin membrane. It is found in the apical cell membrane. The protein resides in the recycling endosome membrane. It localises to the vesicle. Main component of the myelin sheath that plays an important role in myelin membrane biogenesis and myelination. Plays an essential function in apical endocytosis. Plays an important role by activating the Notch signaling pathway, which is essential for cell differentiation and results in correct patterning of the intestinal epithelium, particularly of the posterior gut absorptive cells. This chain is Plasmolipin (pllp), found in Danio rerio (Zebrafish).